The sequence spans 106 residues: UPF0060 membrane protein Bphy_5052 (106 aa).

4 helical membrane-spanning segments follow: residues L4 to W24, S30 to F50, V58 to D78, and P82 to F102.

The protein belongs to the UPF0060 family.

Its subcellular location is the cell inner membrane. The protein is UPF0060 membrane protein Bphy_5052 of Paraburkholderia phymatum (strain DSM 17167 / CIP 108236 / LMG 21445 / STM815) (Burkholderia phymatum).